A 710-amino-acid polypeptide reads, in one-letter code: Putative transmembrane protein ORF710 (710 aa).

The signal sequence occupies residues 1–33; that stretch reads MKLDRKKKRLLLKTIFSIVILILPLTFLHPTNS. 3 helical membrane-spanning segments follow: residues 41 to 61, 76 to 95, and 689 to 709; these read VPIQIIYNYNVSGGVIYTAPL, YGTLLYSYLFSTNPAFVVWY, and VAIVSMAYGTKIWIGVFIFAI.

The protein resides in the host membrane. This is Putative transmembrane protein ORF710 from Acidianus convivator (ATV).